Consider the following 201-residue polypeptide: Recombination protein RecR (201 aa).

The C4-type zinc-finger motif lies at 57–74; it reads CRICGFITSKDDDPCVIC. The region spanning 82-178 is the Toprim domain; the sequence is SKIFVVENSQ…KVTRLARGLS (97 aa).

Belongs to the RecR family.

In terms of biological role, may play a role in DNA repair. It seems to be involved in an RecBC-independent recombinational process of DNA repair. It may act with RecF and RecO. The protein is Recombination protein RecR of Oenococcus oeni (strain ATCC BAA-331 / PSU-1).